Reading from the N-terminus, the 475-residue chain is Methyltransferase-like protein 25B (475 aa).

Residues 186-210 (QRLVERAQRLDQELLQTLEKEEKRN) adopt a coiled-coil conformation. The chain crosses the membrane as a helical span at residues 406-426 (VVAFFSLALLLAPLVETLILL).

The protein belongs to the METTL25 family.

Its subcellular location is the membrane. In Bos taurus (Bovine), this protein is Methyltransferase-like protein 25B.